The chain runs to 126 residues: Large ribosomal subunit protein bL12 (126 aa).

It belongs to the bacterial ribosomal protein bL12 family. Homodimer. Part of the ribosomal stalk of the 50S ribosomal subunit. Forms a multimeric L10(L12)X complex, where L10 forms an elongated spine to which 2 to 4 L12 dimers bind in a sequential fashion. Binds GTP-bound translation factors.

Its function is as follows. Forms part of the ribosomal stalk which helps the ribosome interact with GTP-bound translation factors. Is thus essential for accurate translation. The protein is Large ribosomal subunit protein bL12 of Paracidovorax citrulli (strain AAC00-1) (Acidovorax citrulli).